The following is a 355-amino-acid chain: MKIAVLPGDGIGPEIVNEAVKVLNALDEKFELEQAPVGGAGYEASGHPLPDATLKLAKEADAILFGAVGDWKYDSLERALRPEQAILGLRKHLELFANFRPAICYPQLVDASPLKPELVAGLDILIVRELNGDIYFGQPRGVRTAPDGLFAGEREGFDTMRYSEPEVRRIAHVAFQAARKRAKKLLSVDKANVLETSQFWRDIMIDVSKEYADVELSHMYVDNAAMQLAKAPKQFDVIVTGNMFGDILSDEASMLTGSIGMLPSASLDKNNKGLYEPSHGSAPDIAGKGIANPLATILSAAMMLRYSLNRAEQADRIERAVKTVLEQGYRTGDIATPGGQQVGTTAMGDAVVAAL.

The substrate site is built by Arg90, Arg100, Arg128, and Asp222. Mg(2+) is bound by residues Asp222, Asp246, and Asp250. Residue 280–292 (GSAPDIAGKGIAN) coordinates NAD(+).

This sequence belongs to the isocitrate and isopropylmalate dehydrogenases family. LeuB type 1 subfamily. In terms of assembly, homodimer. The cofactor is Mg(2+). It depends on Mn(2+) as a cofactor.

The protein localises to the cytoplasm. The enzyme catalyses (2R,3S)-3-isopropylmalate + NAD(+) = 4-methyl-2-oxopentanoate + CO2 + NADH. Its pathway is amino-acid biosynthesis; L-leucine biosynthesis; L-leucine from 3-methyl-2-oxobutanoate: step 3/4. Its function is as follows. Catalyzes the oxidation of 3-carboxy-2-hydroxy-4-methylpentanoate (3-isopropylmalate) to 3-carboxy-4-methyl-2-oxopentanoate. The product decarboxylates to 4-methyl-2 oxopentanoate. The polypeptide is 3-isopropylmalate dehydrogenase (Burkholderia lata (strain ATCC 17760 / DSM 23089 / LMG 22485 / NCIMB 9086 / R18194 / 383)).